The primary structure comprises 510 residues: Polyamine aminopropyltransferase 2 (510 aa).

6 helical membrane passes run 6 to 26, 38 to 58, 74 to 94, 102 to 122, 140 to 160, and 165 to 185; these read ALLVLAVFVVASCGLAYELIA, ILQFSSIIGAYLFAMGIGSWV, LELLVGLFGGVSAAALFLLFA, LVLYALVTVIGVLVGMEIPLV, VLTFDYLGALAVSLLFPLVLA, and LVRTGFLFGLCNTAIAVWTLW. One can recognise a PABS domain in the interval 205–449; that stretch reads AGMVGAALLA…GEWGFILAAP (245 aa). The tract at residues 207–456 is spermidine synthase; it reads MVGAALLAGF…AAPGRADFRP (250 aa). Glutamine 244 contributes to the S-methyl-5'-thioadenosine binding site. 2 residues coordinate spermidine: histidine 274 and aspartate 298. S-methyl-5'-thioadenosine is bound by residues aspartate 318 and 352 to 353; that span reads DA. Catalysis depends on aspartate 370, which acts as the Proton acceptor.

Belongs to the spermidine/spermine synthase family. As to quaternary structure, homodimer or homotetramer.

Its subcellular location is the cell membrane. It carries out the reaction S-adenosyl 3-(methylsulfanyl)propylamine + putrescine = S-methyl-5'-thioadenosine + spermidine + H(+). Its pathway is amine and polyamine biosynthesis; spermidine biosynthesis; spermidine from putrescine: step 1/1. Functionally, catalyzes the irreversible transfer of a propylamine group from the amino donor S-adenosylmethioninamine (decarboxy-AdoMet) to putrescine (1,4-diaminobutane) to yield spermidine. The sequence is that of Polyamine aminopropyltransferase 2 from Ralstonia nicotianae (strain ATCC BAA-1114 / GMI1000) (Ralstonia solanacearum).